The chain runs to 497 residues: Glutamate--tRNA ligase (497 aa).

The short motif at 12–22 (PSPTGHLHIGN) is the 'HIGH' region element. Positions 259 to 263 (KLSKR) match the 'KMSKS' region motif. Residue lysine 262 participates in ATP binding.

This sequence belongs to the class-I aminoacyl-tRNA synthetase family. Glutamate--tRNA ligase type 1 subfamily. In terms of assembly, monomer.

It localises to the cytoplasm. The enzyme catalyses tRNA(Glu) + L-glutamate + ATP = L-glutamyl-tRNA(Glu) + AMP + diphosphate. Catalyzes the attachment of glutamate to tRNA(Glu) in a two-step reaction: glutamate is first activated by ATP to form Glu-AMP and then transferred to the acceptor end of tRNA(Glu). This is Glutamate--tRNA ligase from Lacticaseibacillus casei (strain BL23) (Lactobacillus casei).